The sequence spans 121 residues: Large ribosomal subunit protein bL12 (121 aa).

It belongs to the bacterial ribosomal protein bL12 family. As to quaternary structure, homodimer. Part of the ribosomal stalk of the 50S ribosomal subunit. Forms a multimeric L10(L12)X complex, where L10 forms an elongated spine to which 2 to 4 L12 dimers bind in a sequential fashion. Binds GTP-bound translation factors.

Forms part of the ribosomal stalk which helps the ribosome interact with GTP-bound translation factors. Is thus essential for accurate translation. This Klebsiella pneumoniae (strain 342) protein is Large ribosomal subunit protein bL12.